A 205-amino-acid polypeptide reads, in one-letter code: Outer-membrane lipoprotein LolB (205 aa).

The signal sequence occupies residues 1–17 (MFLRHVIVFSFIALLAG). A lipid anchor (N-palmitoyl cysteine) is attached at Cys18. The S-diacylglycerol cysteine moiety is linked to residue Cys18.

The protein belongs to the LolB family. In terms of assembly, monomer.

The protein localises to the cell outer membrane. Plays a critical role in the incorporation of lipoproteins in the outer membrane after they are released by the LolA protein. In Pseudomonas fluorescens (strain Pf0-1), this protein is Outer-membrane lipoprotein LolB.